Consider the following 82-residue polypeptide: Omega-ctenitoxin-Pn1a (82 aa).

The N-terminal stretch at 1-21 is a signal peptide; it reads MWLKIQVFLLAITLITLGIQA. Residues 22 to 37 constitute a propeptide that is removed on maturation; it reads EPNSSPNNPLIEEEAR. 4 disulfide bridges follow: Cys39/Cys54, Cys46/Cys59, Cys53/Cys70, and Cys61/Cys68. Residues 72–82 constitute a propeptide that is removed on maturation; the sequence is KKFIEFFGGGK.

It belongs to the neurotoxin 02 (plectoxin) family. In terms of tissue distribution, expressed by the venom gland.

The protein localises to the secreted. Antagonist of L-type calcium channels (Cav1/CACNA1). Induces immediate clockwise gyration and flaccid paralysis after 6 hours at dose levels of 5 ug per mouse. The sequence is that of Omega-ctenitoxin-Pn1a from Phoneutria nigriventer (Brazilian armed spider).